We begin with the raw amino-acid sequence, 388 residues long: Fructose-bisphosphate aldolase, chloroplastic (388 aa).

A chloroplast-targeting transit peptide spans 1–38 (MASATLLKSSFLPKKSEWGATRQAAAPKPVTVSMVVRA). Position 72 (Arg-72) interacts with substrate. The Proton acceptor role is filled by Glu-215. Lys-257 (schiff-base intermediate with dihydroxyacetone-P) is an active-site residue. Substrate contacts are provided by residues 299-301 (SGG) and Arg-329.

This sequence belongs to the class I fructose-bisphosphate aldolase family. In terms of assembly, homotetramer. Expressed in leaf mesophyll cells.

It is found in the plastid. It localises to the chloroplast. Its subcellular location is the plastoglobule. The enzyme catalyses beta-D-fructose 1,6-bisphosphate = D-glyceraldehyde 3-phosphate + dihydroxyacetone phosphate. It functions in the pathway carbohydrate degradation; glycolysis; D-glyceraldehyde 3-phosphate and glycerone phosphate from D-glucose: step 4/4. Plays a key role in glycolysis and gluconeogenesis. The polypeptide is Fructose-bisphosphate aldolase, chloroplastic (Oryza sativa subsp. japonica (Rice)).